Reading from the N-terminus, the 317-residue chain is ATP synthase gamma chain (317 aa).

It belongs to the ATPase gamma chain family. In terms of assembly, F-type ATPases have 2 components, CF(1) - the catalytic core - and CF(0) - the membrane proton channel. CF(1) has five subunits: alpha(3), beta(3), gamma(1), delta(1), epsilon(1). CF(0) has three main subunits: a, b and c.

It is found in the cellular thylakoid membrane. Functionally, produces ATP from ADP in the presence of a proton gradient across the membrane. The gamma chain is believed to be important in regulating ATPase activity and the flow of protons through the CF(0) complex. The polypeptide is ATP synthase gamma chain (Synechococcus sp. (strain CC9902)).